The chain runs to 445 residues: Inositol-pentakisphosphate 2-kinase IPK1 (445 aa).

ATP contacts are provided by residues 19–22 (GAAN) and R40. Residue R127 participates in substrate binding. ATP-binding positions include 144–146 (SDH) and 162–164 (EIK). Positions 162–166 (EIKAK) match the EXKPK motif motif. K166, K196, and N234 together coordinate substrate. R237 contributes to the ATP binding site. Residues H312, C322, C325, and H341 each coordinate Zn(2+). A substrate-binding site is contributed by D363. Residue D402 participates in ATP binding. The substrate site is built by K406, K410, and Y414.

The protein belongs to the IPK1 type 2 family. It depends on Zn(2+) as a cofactor.

It catalyses the reaction 1D-myo-inositol 1,3,4,5,6-pentakisphosphate + ATP = 1D-myo-inositol hexakisphosphate + ADP + H(+). Functionally, phosphorylates Ins(1,3,4,5,6)P5 at position 2 to form Ins(1,2,3,4,5,6)P6 (InsP6 or phytate). Phytate is a regulator of intracellular signaling, a highly abundant animal antinutrient, and a phosphate store in plant seeds. Also phosphorylates Ins(1,3,4,6)P4 and Ins(1,4,5,6)P4 to produce Ins(1,2,3,4,6)P5 and Ins(1,2,4,5,6)P5. The chain is Inositol-pentakisphosphate 2-kinase IPK1 from Oryza sativa subsp. indica (Rice).